The chain runs to 1155 residues: Cilia- and flagella-associated protein 251 (1155 aa).

2 stretches are compositionally biased toward basic and acidic residues: residues 1–19 (MSDA…GETE) and 31–59 (KEVE…KTGE). Disordered stretches follow at residues 1–144 (MSDA…KLSL) and 167–225 (LDQI…DIQS). Positions 60-69 (EEGEEEEEKE) are enriched in acidic residues. Residues 70–95 (EEGKKDKKIVMEETEEKAGESQEKEA) are compositionally biased toward basic and acidic residues. Low complexity predominate over residues 99–111 (QEETTVEPQEVTE). Composition is skewed to polar residues over residues 118-128 (TQITDSQSVTS) and 172-182 (PEEQQISSPER). Over residues 201-220 (GQERRDLEPENREEGQERTV) the composition is skewed to basic and acidic residues. 14 WD repeats span residues 341–383 (PVHT…IWKW), 391–431 (ACTL…AWYE), 442–481 (LLTE…VWDI), 499–534 (PCKL…FYDH), 537–597 (SIVN…VYHL), 601–641 (GTKL…VWNY), 647–684 (LFSR…ILDA), 694–730 (PFKY…MLVV), 737–780 (WEYL…GYDL), 791–831 (LDIH…LFNA), 837–883 (RKTL…ILPV), 889–927 (KTSA…QWKI), 965–1005 (YFYY…FYPS), and 1025–1065 (GKLI…GYTN).

The protein resides in the cytoplasm. It is found in the cytoskeleton. Its subcellular location is the cilium axoneme. The protein localises to the cell projection. It localises to the cilium. The protein resides in the flagellum. Its function is as follows. Involved in spermatozoa motility. May also regulate cilium motility through its role in the assembly of the axonemal radial spokes. The polypeptide is Cilia- and flagella-associated protein 251 (Pongo abelii (Sumatran orangutan)).